Reading from the N-terminus, the 333-residue chain is Protein FanF (333 aa).

An N-terminal signal peptide occupies residues 1–22 (MKNKYNLLFFLFLLCYGDVALA).

Three disulfide bonds are present.

It is found in the fimbrium. Functionally, minor component of K99 fimbriae. Is not required for binding of K99 fimbriae to the ganglioside receptor. May play a role in initiation, elongation and flexibility of the fimbriae. This Escherichia coli protein is Protein FanF (fanF).